The chain runs to 625 residues: tRNA uridine 5-carboxymethylaminomethyl modification enzyme MnmG (625 aa).

FAD is bound by residues 9-14 (GGGHAG), Val-121, and Ser-177. 271–285 (GPRYCPSIEDKVNRF) lines the NAD(+) pocket. Gln-368 is an FAD binding site.

This sequence belongs to the MnmG family. In terms of assembly, homodimer. Heterotetramer of two MnmE and two MnmG subunits. Requires FAD as cofactor.

It is found in the cytoplasm. In terms of biological role, NAD-binding protein involved in the addition of a carboxymethylaminomethyl (cmnm) group at the wobble position (U34) of certain tRNAs, forming tRNA-cmnm(5)s(2)U34. This is tRNA uridine 5-carboxymethylaminomethyl modification enzyme MnmG from Aliarcobacter butzleri (strain RM4018) (Arcobacter butzleri).